A 357-amino-acid chain; its full sequence is MASVLNVKESKAPERTVVVAGLPVDLFSDQLLAVLVKSHFQDIKNEGGDVEDVIYPTRTKGVAYVIFKEKKVAENVIRQKKHWLARKTRHAELTVSLRVSHFGDKIFSSVNAILDLSVFGKEVTLETLVKDLKKKIPSLSFSPLKPNGRISVEGSFLAVKRLRESLLARACSLLEKDRNFTSEERKWNRQNPQRNLQRSNNSLASVRTLVPETARSGEMLVLDTDVFLYLKHKCGSYESTLKKFHILSQEKVDGEITTICLKSIQVGSQPNNAKHVKELIEEWSHALYLKLRKETFILEGKENREKRMIKRACEQLSSRYLEVLINLYRTHIDIIGSSSDTYLFKKGVMKLIGQKVS.

Residues 15-104 (RTVVVAGLPV…VSLRVSHFGD (90 aa)) enclose the RRM domain.

In Homo sapiens (Human), this protein is RNA-binding protein 43 (RBM43).